Consider the following 127-residue polypeptide: Small ribosomal subunit protein uS13 (127 aa).

Residues 95–118 are compositionally biased toward basic residues; that stretch reads GLPVRGQRTHTNARTRKGPKKGLV. The disordered stretch occupies residues 95-127; the sequence is GLPVRGQRTHTNARTRKGPKKGLVRKAAAPAPK.

This sequence belongs to the universal ribosomal protein uS13 family. In terms of assembly, part of the 30S ribosomal subunit. Forms a loose heterodimer with protein S19. Forms two bridges to the 50S subunit in the 70S ribosome.

In terms of biological role, located at the top of the head of the 30S subunit, it contacts several helices of the 16S rRNA. In the 70S ribosome it contacts the 23S rRNA (bridge B1a) and protein L5 of the 50S subunit (bridge B1b), connecting the 2 subunits; these bridges are implicated in subunit movement. Contacts the tRNAs in the A and P-sites. In Anaeromyxobacter sp. (strain Fw109-5), this protein is Small ribosomal subunit protein uS13.